A 376-amino-acid polypeptide reads, in one-letter code: Protein RecA (376 aa).

Residue 79-86 coordinates ATP; that stretch reads GPESSGKT. Residues 357-376 are disordered; the sequence is AAARAATDKPVETKGANAAA.

Belongs to the RecA family.

The protein resides in the cytoplasm. Can catalyze the hydrolysis of ATP in the presence of single-stranded DNA, the ATP-dependent uptake of single-stranded DNA by duplex DNA, and the ATP-dependent hybridization of homologous single-stranded DNAs. It interacts with LexA causing its activation and leading to its autocatalytic cleavage. The chain is Protein RecA from Synechococcus sp. (strain CC9902).